Consider the following 82-residue polypeptide: Small ribosomal subunit protein bS18 (82 aa).

Positions 1-20 are disordered; it reads MVDINQIPTRRPFHRRRKTC.

This sequence belongs to the bacterial ribosomal protein bS18 family. As to quaternary structure, part of the 30S ribosomal subunit. Forms a tight heterodimer with protein bS6.

In terms of biological role, binds as a heterodimer with protein bS6 to the central domain of the 16S rRNA, where it helps stabilize the platform of the 30S subunit. The chain is Small ribosomal subunit protein bS18 from Mesorhizobium japonicum (strain LMG 29417 / CECT 9101 / MAFF 303099) (Mesorhizobium loti (strain MAFF 303099)).